The chain runs to 91 residues: Large ribosomal subunit protein bL27 (91 aa).

Residues 1–26 are disordered; that stretch reads MAHKKGVGSSRNGRDSNPKMRGVKRF.

It belongs to the bacterial ribosomal protein bL27 family.

This chain is Large ribosomal subunit protein bL27, found in Chloroflexus aurantiacus (strain ATCC 29366 / DSM 635 / J-10-fl).